The sequence spans 368 residues: Glycolate oxidase 2 (368 aa).

One can recognise an FMN hydroxy acid dehydrogenase domain in the interval 1 to 360; the sequence is MALVTNVCEY…TRGHVVTESD (360 aa). FMN contacts are provided by residues 78–80, Ser107, 128–130, and Thr156; these read PTA and QLS. Arg165 contributes to the glyoxylate binding site. Residues Lys231 and Ser253 each contribute to the FMN site. 2 residues coordinate glyoxylate: His255 and Arg258. Catalysis depends on His255, which acts as the Proton acceptor. Residues 286–290 and 309–310 contribute to the FMN site; these read DSGFR and GR. A Microbody targeting signal motif is present at residues 366–368; the sequence is SRL.

This sequence belongs to the FMN-dependent alpha-hydroxy acid dehydrogenase family. As to quaternary structure, homotetramer. The cofactor is FMN.

It is found in the peroxisome. It carries out the reaction glycolate + O2 = glyoxylate + H2O2. It functions in the pathway photosynthesis; photorespiration; glycine from 2-phosphoglycolate: step 2/3. Catalyzes the oxidation of glycolate to glyoxylate, with a reduction of O2 to H2O2. Is a key enzyme in photorespiration in green plants. The chain is Glycolate oxidase 2 (GLO2) from Oryza sativa subsp. indica (Rice).